A 1288-amino-acid polypeptide reads, in one-letter code: MGSPEGRFHFAIDRGGTFTDVFAQCPGGHVRVLKLLSEDPANYADAPTEGIRRILEQEAGMLLPRDQPLDSSHIASIRMGTTVATNALLERKGERVALLVTRGFRDLLHIGTQARGDLFDLAVPMPEVLYEEVLEVDERVVLHRGEAGTGTPVKGRTGDLLEVQQPVDLGALRGKLEGLLSRGIRSLAVVLMHSYTWAQHEQQVGVLARELGFTHVSLSSEAMPMVRIVPRGHTACADAYLTPAIQRYVQGFCRGFQGQLKDVQVLFMRSDGGLAPMDTFSGSSAVLSGPAGGVVGYSATTYQQEGGQPVIGFDMGGTSTDVSRYAGEFEHVFEASTAGVTLQAPQLDINTVAAGGGSRLFFRSGLFVVGPESAGAHPGPACYRKGGPVTVTDANLVLGRLLPASFPCIFGPGENQPLSPEASRKALEAVATEVNSFLTNGPCPASPLSLEEVAMGFVRVANEAMCRPIRALTQARGHDPSAHVLACFGGAGGQHACAIARALGMDTVHIHRHSGLLSALGLALADVVHEAQEPCSLLYAPETFVQLDQRLSRLEEQCVDALQAQGFPRSQISTESFLHLRYQGTDCALMVSAHQHPATARSPRAGDFGAAFVERYMREFGFVIPERPVVVDDVRVRGTGRSGLRLEDAPKAQTGPPRVDKMTQCYFEGGYQETPVYLLAELGYGHKLHGPCLIIDSNSTILVEPGCQAEVTKTGDICISVGAEVPGTVGPQLDPIQLSIFSHRFMSIAEQMGRILQRTAISTNIKERLDFSCALFGPDGGLVSNAPHIPVHLGAMQETVQFQIQHLGADLHPGDVLLSNHPSAGGSHLPDLTVITPVFWPGQTRPVFYVASRGHHADIGGITPGSMPPHSTMLQQEGAVFLSFKLVQGGVFQEEAVTEALRAPGKVPNCSGTRNLHDNLSDLRAQVAANQKGIQLVGELIGQYGLDVVQAYMGHIQANAELAVRDMLRAFGTSRQARGLPLEVSSEDHMDDGSPIRLRVQISLSQGSAVFDFSGTGPEVFGNLNAPRAVTLSALIYCLRCLVGRDIPLNQGCLAPVRVVIPRGSILDPSPEAAVVGGNVLTSQRVVDVILGAFGACAASQGCMNNVTLGNAHMGYYETVAGGAGAGPSWHGRSGVHSHMTNTRITDPEILESRYPVILRRFELRRGSGGRGRFRGGDGVTRELLFREEALLSVLTERRAFRPYGLHGGEPGARGLNLLIRKNGRTVNLGGKTSVTVYPGDVFCLHTPGGGGYGDPEDPAPPPGSPPQALAFPEHGSVYEYRRAQEAV.

Position 151 is a phosphothreonine (threonine 151). A disordered region spans residues 1248–1272 (PGGGGYGDPEDPAPPPGSPPQALAF). Serine 1265 bears the Phosphoserine mark.

It belongs to the oxoprolinase family. As to quaternary structure, homodimer.

The protein localises to the cytoplasm. It localises to the cytosol. It catalyses the reaction 5-oxo-L-proline + ATP + 2 H2O = L-glutamate + ADP + phosphate + H(+). Its function is as follows. Catalyzes the cleavage of 5-oxo-L-proline to form L-glutamate coupled to the hydrolysis of ATP to ADP and inorganic phosphate. The chain is 5-oxoprolinase from Homo sapiens (Human).